The chain runs to 217 residues: Ras-related protein RABA2d (217 aa).

19 to 26 serves as a coordination point for GTP; the sequence is GDSGVGKT. The short motif at 41–49 is the Effector region element; that stretch reads SKSTIGVEF. Residues 67-71, 125-128, and 155-156 contribute to the GTP site; these read DTAGQ, NKAD, and SA. A disordered region spans residues 196-217; sequence GQGTTINVEDTSGAGKRGCCST. Residues Cys214 and Cys215 are each lipidated (S-geranylgeranyl cysteine).

It belongs to the small GTPase superfamily. Rab family. Expressed in root tips.

The protein localises to the endosome membrane. It localises to the golgi apparatus. The protein resides in the trans-Golgi network membrane. In terms of biological role, intracellular vesicle trafficking and protein transport. The protein is Ras-related protein RABA2d (RABA2D) of Arabidopsis thaliana (Mouse-ear cress).